The chain runs to 230 residues: Iron-dependent repressor IdeR (230 aa).

The 62-residue stretch at 4 to 65 (LVDTTEMYLR…VAGDRHLELT (62 aa)) folds into the HTH dtxR-type domain.

This sequence belongs to the DtxR/MntR family. Homodimer.

The protein localises to the cytoplasm. Metal-dependent DNA-binding protein that controls transcription of many genes involved in iron metabolism. The protein is Iron-dependent repressor IdeR (ideR) of Mycobacterium bovis (strain ATCC BAA-935 / AF2122/97).